The following is a 465-amino-acid chain: Gamma-aminobutyric acid receptor subunit alpha-6 (465 aa).

An N-terminal signal peptide occupies residues 1 to 19; sequence MALLIAWVCVAVSIEKALG. At 20-243 the chain is on the extracellular side; the sequence is GQGDGGDLYS…FHLQRKMGYF (224 aa). N-linked (GlcNAc...) asparagine glycosylation occurs at N31. Residue R84 participates in 4-aminobutanoate binding. 2 N-linked (GlcNAc...) asparagine glycosylation sites follow: N128 and N141. T147 lines the 4-aminobutanoate pocket. Cysteines 156 and 170 form a disulfide. Residues 244–264 form a helical membrane-spanning segment; it reads MIQIYTPCIMTVILSQVSFWI. Residues 265-270 are Cytoplasmic-facing; the sequence is NKESVP. The chain crosses the membrane as a helical span at residues 271–290; sequence ARTVFGITTVLTMTTLSISA. Over 291–304 the chain is Extracellular; it reads RHSLPKVSYATAMD. A helical membrane pass occupies residues 305–325; that stretch reads WFIAVCFAFVFSALIEFAAVN. Topologically, residues 326–424 are cytoplasmic; sequence YFTNLQTQRA…GTSKIDQYSR (99 aa). Positions 392-415 are disordered; it reads NSASQCQPVSAPPPAPPAPPPVGG. A compositionally biased stretch (pro residues) spans 401-413; the sequence is SAPPPAPPAPPPV. A helical membrane pass occupies residues 425-445; it reads ILFPVAFAGFNLVYWVVYLSK. Over 446–465 the chain is Extracellular; sequence DTMEFFEPTAMHLRNDHQSN.

The protein belongs to the ligand-gated ion channel (TC 1.A.9) family. Gamma-aminobutyric acid receptor (TC 1.A.9.5) subfamily. GABRA6 sub-subfamily. As to quaternary structure, heteropentamer, formed by a combination of alpha (GABRA1-6), beta (GABRB1-3), gamma (GABRG1-3), delta (GABRD), epsilon (GABRE), rho (GABRR1-3), pi (GABRP) and theta (GABRQ) chains, each subunit exhibiting distinct physiological and pharmacological properties. As to expression, expressed in brain, in cerebellar granule cells.

It localises to the postsynaptic cell membrane. The protein resides in the cell membrane. It carries out the reaction chloride(in) = chloride(out). In terms of biological role, alpha subunit of the heteropentameric ligand-gated chloride channel gated by gamma-aminobutyric acid (GABA), a major inhibitory neurotransmitter in the brain. GABA-gated chloride channels, also named GABA(A) receptors (GABAAR), consist of five subunits arranged around a central pore and contain GABA active binding site(s) located at the alpha and beta subunit interface(s). When activated by GABA, GABAARs selectively allow the flow of chloride anions across the cell membrane down their electrochemical gradient. The protein is Gamma-aminobutyric acid receptor subunit alpha-6 (GABRA6) of Gallus gallus (Chicken).